Consider the following 230-residue polypeptide: Protein CWC15 homolog B (230 aa).

The interval 1–126 is disordered; the sequence is MTTAARPTFE…DEDSDDDTAA (126 aa). Polar residues predominate over residues 22 to 34; it reads DLSQLSKQYSSRD. Over residues 52–84 the composition is skewed to basic and acidic residues; sequence EEVRSRDFRRELEERERVAVRDKNRDRPTREHT. Residues 102–124 are compositionally biased toward acidic residues; it reads DADDPLTDEDADEDSDEDSDDDT. Positions 121-165 form a coiled coil; sequence DDDTAALLAELEKIKKERAEEQVRKELEQKAEEERIRMENILSGN.

This sequence belongs to the CWC15 family. In terms of assembly, identified in the spliceosome C complex. Component of the minor spliceosome, which splices U12-type introns.

It is found in the nucleus. Involved in pre-mRNA splicing as component of the spliceosome. This chain is Protein CWC15 homolog B (cwc15-b), found in Xenopus laevis (African clawed frog).